The primary structure comprises 72 residues: Translation initiation factor IF-1 (72 aa).

The region spanning 1–72 is the S1-like domain; that stretch reads MAKEGNIEME…SKGRIVYRAR (72 aa).

Belongs to the IF-1 family. Component of the 30S ribosomal translation pre-initiation complex which assembles on the 30S ribosome in the order IF-2 and IF-3, IF-1 and N-formylmethionyl-tRNA(fMet); mRNA recruitment can occur at any time during PIC assembly.

The protein localises to the cytoplasm. One of the essential components for the initiation of protein synthesis. Stabilizes the binding of IF-2 and IF-3 on the 30S subunit to which N-formylmethionyl-tRNA(fMet) subsequently binds. Helps modulate mRNA selection, yielding the 30S pre-initiation complex (PIC). Upon addition of the 50S ribosomal subunit IF-1, IF-2 and IF-3 are released leaving the mature 70S translation initiation complex. The polypeptide is Translation initiation factor IF-1 (Hahella chejuensis (strain KCTC 2396)).